The following is a 149-amino-acid chain: Large ribosomal subunit protein uL22c (149 aa).

Belongs to the universal ribosomal protein uL22 family. In terms of assembly, part of the 50S ribosomal subunit.

Its subcellular location is the plastid. It is found in the chloroplast. This protein binds specifically to 23S rRNA. In terms of biological role, the globular domain of the protein is located near the polypeptide exit tunnel on the outside of the subunit, while an extended beta-hairpin is found that lines the wall of the exit tunnel in the center of the 70S ribosome. The chain is Large ribosomal subunit protein uL22c (rpl22) from Brachypodium distachyon (Purple false brome).